We begin with the raw amino-acid sequence, 308 residues long: HPr kinase/phosphorylase (308 aa).

Active-site residues include His138 and Lys159. 153 to 160 (GESGLGKS) is an ATP binding site. Ser160 contacts Mg(2+). The active-site Proton acceptor; for phosphorylation activity. Proton donor; for dephosphorylation activity is Asp177. The important for the catalytic mechanism of both phosphorylation and dephosphorylation stretch occupies residues 201 to 210 (LEVRGLGLLD). Glu202 serves as a coordination point for Mg(2+). Arg243 is a catalytic residue. An important for the catalytic mechanism of dephosphorylation region spans residues 264-269 (QVAAGR).

The protein belongs to the HPrK/P family. Homohexamer. Mg(2+) serves as cofactor.

The catalysed reaction is [HPr protein]-L-serine + ATP = [HPr protein]-O-phospho-L-serine + ADP + H(+). It carries out the reaction [HPr protein]-O-phospho-L-serine + phosphate + H(+) = [HPr protein]-L-serine + diphosphate. Catalyzes the ATP- as well as the pyrophosphate-dependent phosphorylation of a specific serine residue in HPr, a phosphocarrier protein of the phosphoenolpyruvate-dependent sugar phosphotransferase system (PTS). HprK/P also catalyzes the pyrophosphate-producing, inorganic phosphate-dependent dephosphorylation (phosphorolysis) of seryl-phosphorylated HPr (P-Ser-HPr). The sequence is that of HPr kinase/phosphorylase from Bordetella petrii (strain ATCC BAA-461 / DSM 12804 / CCUG 43448).